A 200-amino-acid polypeptide reads, in one-letter code: Golgi to ER traffic protein 1 (200 aa).

Residues Met-1–Leu-6 lie on the Lumenal side of the membrane. Residues Leu-7 to Gln-26 traverse the membrane as a helical segment. Residues Ser-27–Ile-113 lie on the Cytoplasmic side of the membrane. A coiled-coil region spans residues Ala-75–Thr-107. A helical transmembrane segment spans residues Ala-114–Phe-134. The Lumenal segment spans residues Tyr-135–Gly-158. The chain crosses the membrane as a helical span at residues Val-159–Leu-175. The Cytoplasmic segment spans residues Thr-176–Leu-200.

It belongs to the WRB/GET1 family. In terms of assembly, component of the Golgi to ER traffic (GET) complex, which is composed of GET1, GET2 and GET3. Within the complex, GET1 and GET2 form a heterotetramer which is stabilized by phosphatidylinositol binding and which binds to the GET3 homodimer.

The protein localises to the endoplasmic reticulum membrane. It is found in the golgi apparatus membrane. Functionally, required for the post-translational delivery of tail-anchored (TA) proteins to the endoplasmic reticulum. Together with GET2, acts as a membrane receptor for soluble GET3, which recognizes and selectively binds the transmembrane domain of TA proteins in the cytosol. The GET complex cooperates with the HDEL receptor ERD2 to mediate the ATP-dependent retrieval of resident ER proteins that contain a C-terminal H-D-E-L retention signal from the Golgi to the ER. This chain is Golgi to ER traffic protein 1, found in Meyerozyma guilliermondii (strain ATCC 6260 / CBS 566 / DSM 6381 / JCM 1539 / NBRC 10279 / NRRL Y-324) (Yeast).